A 62-amino-acid polypeptide reads, in one-letter code: Large ribosomal subunit protein uL29 (62 aa).

It belongs to the universal ribosomal protein uL29 family.

The chain is Large ribosomal subunit protein uL29 from Geobacter sulfurreducens (strain ATCC 51573 / DSM 12127 / PCA).